The following is a 406-amino-acid chain: Cysteine desulfurase (406 aa).

Lys226 is modified (N6-(pyridoxal phosphate)lysine). Cys364 functions as the Cysteine persulfide intermediate in the catalytic mechanism.

This sequence belongs to the class-V pyridoxal-phosphate-dependent aminotransferase family. Csd subfamily. Homodimer. Interacts with SufE and the SufBCD complex composed of SufB, SufC and SufD. The interaction with SufE is required to mediate the direct transfer of the sulfur atom from the S-sulfanylcysteine. The cofactor is pyridoxal 5'-phosphate.

The protein localises to the cytoplasm. It catalyses the reaction (sulfur carrier)-H + L-cysteine = (sulfur carrier)-SH + L-alanine. It carries out the reaction L-selenocysteine + AH2 = hydrogenselenide + L-alanine + A + H(+). Its pathway is cofactor biosynthesis; iron-sulfur cluster biosynthesis. Functionally, cysteine desulfurases mobilize the sulfur from L-cysteine to yield L-alanine, an essential step in sulfur metabolism for biosynthesis of a variety of sulfur-containing biomolecules. Component of the suf operon, which is activated and required under specific conditions such as oxidative stress and iron limitation. Acts as a potent selenocysteine lyase in vitro, that mobilizes selenium from L-selenocysteine. Selenocysteine lyase activity is however unsure in vivo. The sequence is that of Cysteine desulfurase from Serratia proteamaculans (strain 568).